We begin with the raw amino-acid sequence, 127 residues long: DNA-directed RNA polymerase subunit omega (127 aa).

This sequence belongs to the RNA polymerase subunit omega family. As to quaternary structure, the RNAP catalytic core consists of 2 alpha, 1 beta, 1 beta' and 1 omega subunit. When a sigma factor is associated with the core the holoenzyme is formed, which can initiate transcription.

It carries out the reaction RNA(n) + a ribonucleoside 5'-triphosphate = RNA(n+1) + diphosphate. Promotes RNA polymerase assembly. Latches the N- and C-terminal regions of the beta' subunit thereby facilitating its interaction with the beta and alpha subunits. This Rickettsia prowazekii (strain Madrid E) protein is DNA-directed RNA polymerase subunit omega (rpoZ).